We begin with the raw amino-acid sequence, 391 residues long: uncharacterized protein (391 aa).

One can recognise an OBG-type G domain in the interval 85-314 (ATAAFVGFPS…LKEKIYEKLG (230 aa)). Residues 91 to 98 (GFPSVGKS), 137 to 141 (DAPGI), and 267 to 270 (NKID) each bind GTP. Residues 314-389 (GFIKIYLKPQ…EDGDILTIVI (76 aa)) form the TGS domain.

Belongs to the TRAFAC class OBG-HflX-like GTPase superfamily. OBG GTPase family.

This is an uncharacterized protein from Methanocaldococcus jannaschii (strain ATCC 43067 / DSM 2661 / JAL-1 / JCM 10045 / NBRC 100440) (Methanococcus jannaschii).